The following is an 873-amino-acid chain: Bifunctional heparan sulfate N-deacetylase/N-sulfotransferase 3 (873 aa).

Residues 1–13 (MSFIMKLHRHFQR) lie on the Cytoplasmic side of the membrane. The chain crosses the membrane as a helical; Signal-anchor for type II membrane protein span at residues 14 to 34 (TVILLATFCMVSIIISAYYLY). Residues 35-873 (SGYKQENELS…WLRQELQKVR (839 aa)) lie on the Lumenal side of the membrane. Residues 36–589 (GYKQENELSE…KRHRDIWSKE (554 aa)) form a heparan sulfate N-deacetylase 3 region. N-linked (GlcNAc...) asparagine glycosylation is found at asparagine 146, asparagine 226, asparagine 342, and asparagine 392. The tract at residues 590–873 (KTCDRLPKFL…WLRQELQKVR (284 aa)) is heparan sulfate N-sulfotransferase 3. Catalysis depends on lysine 605, which acts as the For sulfotransferase activity. Residue 605 to 609 (KTGTT) coordinates 3'-phosphoadenylyl sulfate. Residue asparagine 658 is glycosylated (N-linked (GlcNAc...) asparagine). Serine 703 is a binding site for 3'-phosphoadenylyl sulfate. The N-linked (GlcNAc...) asparagine glycan is linked to asparagine 794. Cysteine 809 and cysteine 819 are oxidised to a cystine. Residue 824–828 (KGRKY) participates in 3'-phosphoadenylyl sulfate binding.

It belongs to the sulfotransferase 1 family. NDST subfamily. In terms of assembly, monomer. In terms of tissue distribution, expressed in brain, kidney, liver, fetal and adult lung, adult pancreas, placenta, fetal spleen and fetal thymus. Not detected in adult/ fetal heart and skeletal muscle.

It is found in the golgi apparatus membrane. It catalyses the reaction alpha-D-glucosaminyl-[heparan sulfate](n) + 3'-phosphoadenylyl sulfate = N-sulfo-alpha-D-glucosaminyl-[heparan sulfate](n) + adenosine 3',5'-bisphosphate + 2 H(+). It participates in glycan metabolism; heparan sulfate biosynthesis. Its pathway is glycan metabolism; heparin biosynthesis. Its function is as follows. Essential bifunctional enzyme that catalyzes both the N-deacetylation and the N-sulfation of glucosamine (GlcNAc) of the glycosaminoglycan in heparan sulfate. Modifies the GlcNAc-GlcA disaccharide repeating sugar backbone to make N-sulfated heparosan, a prerequisite substrate for later modifications in heparin biosynthesis. Has high deacetylase activity but low sulfotransferase activity. The chain is Bifunctional heparan sulfate N-deacetylase/N-sulfotransferase 3 from Homo sapiens (Human).